Reading from the N-terminus, the 332-residue chain is MPPTVNMGIPGASRSIVENLKRKRVLLAEPRGYCAGVDRAVETVERSLRKYGPPVYVRHEIVHNRHVVETLERAGAVFVEETDYVPEGAIVIFSAHGVAPTVYAAAAERNLRTIDATCPLVTKVHNEVKRFARNDYDILLIGHEGHEEVIATAGEAPTHVQLVDGLAAVQQVVVRDENKVVWLSQTTLSVDETMRIVERLRQRFPKLQDPPSDDICYATQNRQVAVKAMAPECELVIVVGSRNSSNSVRLVEVAMGSGAGAAYLVDWAKDIDPAWLAGVTTVGVTSGASVPDILVQGVLKWLAERGYDVVQSVTTANEALVFALPREIRSAH.

Cys34 provides a ligand contact to [4Fe-4S] cluster. Residues His63 and His96 each contribute to the (2E)-4-hydroxy-3-methylbut-2-enyl diphosphate site. Residues His63 and His96 each coordinate dimethylallyl diphosphate. His63 and His96 together coordinate isopentenyl diphosphate. Cys118 is a binding site for [4Fe-4S] cluster. His146 is a (2E)-4-hydroxy-3-methylbut-2-enyl diphosphate binding site. Residue His146 coordinates dimethylallyl diphosphate. Isopentenyl diphosphate is bound at residue His146. Glu148 serves as the catalytic Proton donor. Thr186 serves as a coordination point for (2E)-4-hydroxy-3-methylbut-2-enyl diphosphate. Residue Cys216 participates in [4Fe-4S] cluster binding. Positions 244, 245, 246, and 289 each coordinate (2E)-4-hydroxy-3-methylbut-2-enyl diphosphate. Dimethylallyl diphosphate is bound by residues Ser244, Ser245, Asn246, and Ser289. Isopentenyl diphosphate is bound by residues Ser244, Ser245, Asn246, and Ser289.

The protein belongs to the IspH family. [4Fe-4S] cluster is required as a cofactor.

The catalysed reaction is isopentenyl diphosphate + 2 oxidized [2Fe-2S]-[ferredoxin] + H2O = (2E)-4-hydroxy-3-methylbut-2-enyl diphosphate + 2 reduced [2Fe-2S]-[ferredoxin] + 2 H(+). It carries out the reaction dimethylallyl diphosphate + 2 oxidized [2Fe-2S]-[ferredoxin] + H2O = (2E)-4-hydroxy-3-methylbut-2-enyl diphosphate + 2 reduced [2Fe-2S]-[ferredoxin] + 2 H(+). The protein operates within isoprenoid biosynthesis; dimethylallyl diphosphate biosynthesis; dimethylallyl diphosphate from (2E)-4-hydroxy-3-methylbutenyl diphosphate: step 1/1. It functions in the pathway isoprenoid biosynthesis; isopentenyl diphosphate biosynthesis via DXP pathway; isopentenyl diphosphate from 1-deoxy-D-xylulose 5-phosphate: step 6/6. Catalyzes the conversion of 1-hydroxy-2-methyl-2-(E)-butenyl 4-diphosphate (HMBPP) into a mixture of isopentenyl diphosphate (IPP) and dimethylallyl diphosphate (DMAPP). Acts in the terminal step of the DOXP/MEP pathway for isoprenoid precursor biosynthesis. The chain is 4-hydroxy-3-methylbut-2-enyl diphosphate reductase from Mycobacterium leprae (strain TN).